We begin with the raw amino-acid sequence, 1415 residues long: Zygote defective protein 9 (1415 aa).

TOG regions lie at residues 1-250 (MSNW…AKNA) and 251-530 (PPVA…AGPA). Positions 21–48 (DELRESKKWQERKEALEALLKVLTDNER) form a coiled coil. HEAT repeat units lie at residues 30–68 (QERK…VLAK), 95–132 (SFAG…TMQS), 135–172 (TGQE…AKQP), and 179–217 (VVPV…VKNL). The tract at residues 243 to 278 (AEEQAKNAPPVAPTSSTPSASAASGDPSGGTATAVV) is disordered. The span at 255–276 (PTSSTPSASAASGDPSGGTATA) shows a compositional bias: low complexity. 4 HEAT repeats span residues 339–377 (ANYG…GLRT), 381–418 (PFAV…TTNL), 420–457 (AVGE…QTMP), and 464–502 (LIPS…SLQL). The disordered stretch occupies residues 544–603 (APPAAAPPKKTAPPKKQPEDEEVVEEEDEPLKPPPGDKKKKVPVKENEENEPPVVAPKAE). The segment covering 562–572 (EDEEVVEEEDE) has biased composition (acidic residues). Residues 602 to 867 (AELLLSDNED…VEERIKRTGV (266 aa)) are TOG 3. HEAT repeat units lie at residues 706–743 (IKVL…LKTG), 764–801 (VGPL…NAGI), and 804–841 (LKSL…FEGD). The interval 867 to 914 (VKPGSGVVTSPPTGGPKILVPQQQGSVVRRPASRSRTREPEPEEVQSD) is disordered.

Belongs to the TOG/XMAP215 family. As to quaternary structure, interacts with tac-1 to form a heterodimer.

Its subcellular location is the cytoplasm. The protein resides in the cytoskeleton. It localises to the spindle pole. It is found in the microtubule organizing center. The protein localises to the centrosome. Its function is as follows. Plays a major role in organizing microtubules and spindle poles during mitosis and meiosis in one-cell stage embryos. Required for default nucleus positioning in oocytes. The polypeptide is Zygote defective protein 9 (Caenorhabditis elegans).